Here is a 303-residue protein sequence, read N- to C-terminus: Haloalkane dehalogenase (303 aa).

The 145-residue stretch at 48 to 192 (PVLLLHGEPS…GTVTKLSQAV (145 aa)) folds into the AB hydrolase-1 domain. The active-site Nucleophile is the aspartate 123. Residue aspartate 250 is the Proton donor of the active site. Residue histidine 280 is the Proton acceptor of the active site.

The protein belongs to the haloalkane dehalogenase family. Type 1 subfamily. Monomer.

It catalyses the reaction 1-haloalkane + H2O = a halide anion + a primary alcohol + H(+). Functionally, catalyzes hydrolytic cleavage of carbon-halogen bonds in halogenated aliphatic compounds, leading to the formation of the corresponding primary alcohols, halide ions and protons. In Psychrobacter cryohalolentis (strain ATCC BAA-1226 / DSM 17306 / VKM B-2378 / K5), this protein is Haloalkane dehalogenase.